The primary structure comprises 598 residues: MSDLSHIRNFSIIAHIDHGKSTLADRFIQMCGGLTEREMEAQVLDSMDLERERGITIKAHSVTLYYKAKDGITYQLNFIDTPGHVDFTYEVSRSLAACEGALLVVDAGQGVEAQSVANCYTAIEQGLEVMPVLNKMDLPQADPDRVKEEIEKIIGIDATDAVACSAKSGMGVDEVLERLVATIPAPTGNIEDPLQALIIDSWFDNYLGVVSLVRVRHGRVKKGDKILVKSTGKLHLVDSVGVFNPKHSATVDLKAGEVGFIIAGIKDIHGAPVGDTLTLSTTPDVDVLPGFKRIQPQVYAGLFPVSSDDFEDFREALQKLTLNDSSLQYLPESSDALGFGFRCGFLGMLHMEIIQERLEREYNLDLITTAPTVIFELLLKTGETIYVDNPSKLPDLSAIEDMREPIVRANILVPQEHLGNVITLCIEKRGVQHDMLFLGTQVQVSYDLPMNEVVLDFFDRLKSVSRGYASLDYHFDRYQSANLVKLDVLINAEKVDALALIVHRDNAHYKGRALTEKMKELIPRQMFDVAIQAAIGGQIVARTTVKALRKNVLAKCYGGDVSRKRKLLEKQKAGKKRMKQVGNVEIPQEAFLAVLRLE.

One can recognise a tr-type G domain in the interval 5 to 187 (SHIRNFSIIA…RLVATIPAPT (183 aa)). GTP contacts are provided by residues 17 to 22 (DHGKST) and 134 to 137 (NKMD).

It belongs to the TRAFAC class translation factor GTPase superfamily. Classic translation factor GTPase family. LepA subfamily.

The protein localises to the cell inner membrane. It carries out the reaction GTP + H2O = GDP + phosphate + H(+). Its function is as follows. Required for accurate and efficient protein synthesis under certain stress conditions. May act as a fidelity factor of the translation reaction, by catalyzing a one-codon backward translocation of tRNAs on improperly translocated ribosomes. Back-translocation proceeds from a post-translocation (POST) complex to a pre-translocation (PRE) complex, thus giving elongation factor G a second chance to translocate the tRNAs correctly. Binds to ribosomes in a GTP-dependent manner. This Pseudomonas syringae pv. syringae (strain B728a) protein is Elongation factor 4.